The chain runs to 314 residues: DNA-directed RNA polymerase subunit alpha (314 aa).

Positions 1–227 (MLEIEKPKIE…DYLKLFVALT (227 aa)) are alpha N-terminal domain (alpha-NTD). The segment at 244-314 (QDKILEMTIE…LGLSLRKSED (71 aa)) is alpha C-terminal domain (alpha-CTD).

It belongs to the RNA polymerase alpha chain family. Homodimer. The RNAP catalytic core consists of 2 alpha, 1 beta, 1 beta' and 1 omega subunit. When a sigma factor is associated with the core the holoenzyme is formed, which can initiate transcription.

It carries out the reaction RNA(n) + a ribonucleoside 5'-triphosphate = RNA(n+1) + diphosphate. Its function is as follows. DNA-dependent RNA polymerase catalyzes the transcription of DNA into RNA using the four ribonucleoside triphosphates as substrates. The polypeptide is DNA-directed RNA polymerase subunit alpha (Heliobacterium modesticaldum (strain ATCC 51547 / Ice1)).